Reading from the N-terminus, the 184-residue chain is Chaperone protein YcdY (184 aa).

It belongs to the TorD/DmsD family. In terms of assembly, interacts with YcdX.

Functionally, acts as a chaperone that increases YcdX activity, maybe by facilitating the correct insertion of the zinc ions into the catalytic site of YcdX. Involved in the swarming motility process. This Escherichia coli (strain K12) protein is Chaperone protein YcdY (ycdY).